The primary structure comprises 622 residues: Low affinity potassium transport system protein Kup (622 aa).

12 helical membrane passes run 9-29 (LPAI…TSPL), 49-69 (VFGF…IKYL), 103-123 (VIMG…TPAI), 137-157 (PQLD…LFMI), 165-185 (VGKL…VLGL), 213-233 (VSFI…ALYA), 247-267 (WFTV…ALLL), 276-296 (PFFL…AALA), 337-357 (IYIP…IVSF), 363-383 (LAAA…ILST), 396-416 (FVAL…SANL), and 419-439 (LLSG…IMTT).

Belongs to the HAK/KUP transporter (TC 2.A.72) family.

It is found in the cell inner membrane. It carries out the reaction K(+)(in) + H(+)(in) = K(+)(out) + H(+)(out). Responsible for the low-affinity transport of potassium into the cell. Likely operates as a K(+):H(+) symporter. The polypeptide is Low affinity potassium transport system protein Kup (Salmonella paratyphi B (strain ATCC BAA-1250 / SPB7)).